The chain runs to 406 residues: COP9 signalosome complex subunit 4 (406 aa).

Ala-2 is subject to N-acetylalanine. The residue at position 25 (Lys-25) is an N6-acetyllysine. Positions 197 to 366 (YRRKFIEAAQ…GIVHFETREA (170 aa)) constitute a PCI domain.

The protein belongs to the CSN4 family. Component of the CSN complex, composed of COPS1/GPS1, COPS2, COPS3, COPS4, COPS5, COPS6, COPS7 (COPS7A or COPS7B), COPS8 and COPS9. In the complex, it probably interacts directly with COPS1, COPS2, COPS3, COPS5, COPS6, COPS7 (COPS7A or COPS7B) and COPS8. Interacts with TOR1A; the interaction is direct and associates TOR1A and SNAPIN with the CSN complex. Interacts with STON2; controls STON2 neddylation levels. Interacts with ERCC6.

The protein localises to the cytoplasm. The protein resides in the nucleus. It is found in the cytoplasmic vesicle. Its subcellular location is the secretory vesicle. It localises to the synaptic vesicle. Its function is as follows. Component of the COP9 signalosome complex (CSN), a complex involved in various cellular and developmental processes. The CSN complex is an essential regulator of the ubiquitin (Ubl) conjugation pathway by mediating the deneddylation of the cullin subunits of SCF-type E3 ligase complexes, leading to decrease the Ubl ligase activity of SCF-type complexes such as SCF, CSA or DDB2. Also involved in the deneddylation of non-cullin subunits such as STON2. The complex is also involved in phosphorylation of p53/TP53, c-jun/JUN, IkappaBalpha/NFKBIA, ITPK1, IRF8/ICSBP and SNAPIN, possibly via its association with CK2 and PKD kinases. CSN-dependent phosphorylation of TP53 and JUN promotes and protects degradation by the Ubl system, respectively. The polypeptide is COP9 signalosome complex subunit 4 (Cops4) (Mus musculus (Mouse)).